A 247-amino-acid polypeptide reads, in one-letter code: Homeobox-leucine zipper protein HOX15 (247 aa).

Positions 1–44 (MAQDDEDVGLALGLSLGSGGHRRQRESRDEAPSSAAASLLTLRL) are disordered. Residues 32–44 (PSSAAASLLTLRL) show a composition bias toward low complexity. The segment at residues 91–150 (NSRKKLRLSKEQSALLEDRFKEHSTLNPKQKVALAKQLNLRPRQVEVWFQNRRARTKLKQ) is a DNA-binding region (homeobox). The leucine-zipper stretch occupies residues 149–193 (KQTEVDCELLKRCCETLTEENRRLHRELQQLRALTHSTAAGFFMA). Positions 221–247 (SPTAAADRTNKPTAPHLFSPFAKSAAC) are disordered.

The protein belongs to the HD-ZIP homeobox family. Class II subfamily. Expressed in seedlings, stems, leaf blades and panicles.

The protein localises to the nucleus. Its function is as follows. Probable transcription factor. The protein is Homeobox-leucine zipper protein HOX15 (HOX15) of Oryza sativa subsp. japonica (Rice).